The sequence spans 779 residues: Chloride channel protein CLC-c (779 aa).

Residue Ser-27 is modified to Phosphoserine. 12 consecutive transmembrane segments (helical) span residues 92-112 (TFLK…VGFL), 142-162 (FAFA…CAFI), 190-210 (STLF…FVVG), 215-235 (MVHT…KKYR), 257-277 (GAAA…LFAL), 287-307 (ALLW…RSLI), 341-361 (LAIV…NYLV), 380-400 (IMLV…LPWL), 466-486 (LAIF…IAIP), 488-508 (GLFI…GRLL), 520-540 (SLLG…SLCV), and 541-561 (ILLE…VLLI). In terms of domain architecture, CBS 1 spans 601 to 659 (DVVSGALISFSRVEKVGVIWQALKMTRHNGFPVIDEPPFTEASELCGIALRSHLLVLLQ). The residue at position 672 (Ser-672) is a Phosphoserine. Residues 713–777 (ITNTSPYTVL…VLGLYPHIDP (65 aa)) form the CBS 2 domain. A helical transmembrane segment spans residues 741 to 761 (HLCVVPKTPGRPPIVGILTRH).

This sequence belongs to the chloride channel (TC 2.A.49) family. As to quaternary structure, homodimer. Interacts with PP2A5. In terms of tissue distribution, broadly expressed in the plant.

The protein resides in the membrane. Functionally, voltage-gated chloride channel. This is Chloride channel protein CLC-c (CLC-C) from Arabidopsis thaliana (Mouse-ear cress).